The sequence spans 359 residues: MAAMRAHARRRHPHALMSRAAGLPRLSWFAGLTWFAGGSTGAGCAAHPALAGLTAGARCPAYAAISASTARPAATAGTTPATGASGSARPTDAAGMADLARPGVVATHAVRTLGTTGSRAIGLCPCQPLDCPRSPQATLNLGSMGRSLDGPQWRRARVRLCGRWWRRSNTTRGASPRPPSTCRGDNVSMIELEVHQADVTKLELDAITNAANTRLRHAGGVAAAIARAGGPELQRESTEKAPIGLGEAVETTAGDMPARYVIHAATMELGGPTSGEIITAATAATLRKADELGCRSLALVAFGTGVGGFPLDDAARLMVGAVRRHRPGSLQRVVFAVHGDAAERAFSAAIQAGEDTARR.

Residues 73-88 (AATAGTTPATGASGSA) are compositionally biased toward low complexity. The tract at residues 73-93 (AATAGTTPATGASGSARPTDA) is disordered. The Macro domain occupies 179-354 (PSTCRGDNVS…AFSAAIQAGE (176 aa)).

This is an uncharacterized protein from Mycobacterium tuberculosis (strain ATCC 25618 / H37Rv).